Consider the following 380-residue polypeptide: Cytochrome b (380 aa).

A run of 4 helical transmembrane segments spans residues Phe-34 to Met-54, Trp-78 to Ile-99, Trp-114 to Leu-134, and Phe-179 to Thr-199. Residues His-84 and His-98 each coordinate heme b. Heme b is bound by residues His-183 and His-197. His-202 lines the a ubiquinone pocket. The next 4 helical transmembrane spans lie at Phe-227–Ser-247, Leu-289–His-309, Leu-321–Ser-341, and Phe-348–Pro-368.

The protein belongs to the cytochrome b family. As to quaternary structure, the cytochrome bc1 complex contains 11 subunits: 3 respiratory subunits (MT-CYB, CYC1 and UQCRFS1), 2 core proteins (UQCRC1 and UQCRC2) and 6 low-molecular weight proteins (UQCRH/QCR6, UQCRB/QCR7, UQCRQ/QCR8, UQCR10/QCR9, UQCR11/QCR10 and a cleavage product of UQCRFS1). This cytochrome bc1 complex then forms a dimer. The cofactor is heme b.

It is found in the mitochondrion inner membrane. Component of the ubiquinol-cytochrome c reductase complex (complex III or cytochrome b-c1 complex) that is part of the mitochondrial respiratory chain. The b-c1 complex mediates electron transfer from ubiquinol to cytochrome c. Contributes to the generation of a proton gradient across the mitochondrial membrane that is then used for ATP synthesis. In Gallus gallus (Chicken), this protein is Cytochrome b (MT-CYB).